Consider the following 138-residue polypeptide: Acidic phospholipase A2 MVL-PLA2 (138 aa).

Positions 1 to 16 (MRTLWIVAVCLMGVEG) are cleaved as a signal peptide. 7 cysteine pairs are disulfide-bonded: Cys-42/Cys-131, Cys-44/Cys-60, Cys-59/Cys-111, Cys-65/Cys-138, Cys-66/Cys-104, Cys-73/Cys-97, and Cys-91/Cys-102. Residues Tyr-43, Gly-45, and Gly-47 each coordinate Ca(2+). His-63 is a catalytic residue. Asp-64 is a binding site for Ca(2+). The May inhibit integrin function (Atypical cell attachment site) signature appears at 86 to 88 (NGD). The active site involves Asp-105.

This sequence belongs to the phospholipase A2 family. Group II subfamily. D49 sub-subfamily. Requires Ca(2+) as cofactor. Expressed by the venom gland.

The protein localises to the secreted. It carries out the reaction a 1,2-diacyl-sn-glycero-3-phosphocholine + H2O = a 1-acyl-sn-glycero-3-phosphocholine + a fatty acid + H(+). Snake venom phospholipase A2 (PLA2) that displays an inhibitory effect, independent from its catalytic activity, on tumor cell adhesion and migration. This effect is mediated via specific inhibition of integrins alpha-5/beta-1 (ITGA5/ITGB1), alpha-v/beta-3 (ITGAV/ITGB3) and alpha-v/beta-6 (ITGAV/ITGB6). PLA2 catalyzes the calcium-dependent hydrolysis of the 2-acyl groups in 3-sn-phosphoglycerides. The protein is Acidic phospholipase A2 MVL-PLA2 of Macrovipera lebetina transmediterranea (Blunt-nosed viper).